Reading from the N-terminus, the 317-residue chain is tRNA pseudouridine synthase B (317 aa).

Aspartate 47 serves as the catalytic Nucleophile.

Belongs to the pseudouridine synthase TruB family. Type 1 subfamily.

It carries out the reaction uridine(55) in tRNA = pseudouridine(55) in tRNA. In terms of biological role, responsible for synthesis of pseudouridine from uracil-55 in the psi GC loop of transfer RNAs. The chain is tRNA pseudouridine synthase B from Shewanella frigidimarina (strain NCIMB 400).